We begin with the raw amino-acid sequence, 139 residues long: Putative lipoprotein MIP_01412 (139 aa).

The signal sequence occupies residues 1-19 (MRNRTVAAGAVLTAALLGA). The N-palmitoyl cysteine moiety is linked to residue Cys-20. Cys-20 carries S-diacylglycerol cysteine lipidation.

This sequence belongs to the mycobacterial 19 kDa antigen family.

Its subcellular location is the cell membrane. In Mycobacterium indicus pranii (strain DSM 45239 / MTCC 9506), this protein is Putative lipoprotein MIP_01412.